A 125-amino-acid polypeptide reads, in one-letter code: Small ribosomal subunit protein uS12 (125 aa).

The interval 9-31 is disordered; it reads RQGREVEKIKSKSPAMENSPQRR. Asp89 carries the 3-methylthioaspartic acid modification. The tract at residues 106–125 is disordered; it reads GVKDRKQSRSKYGAKRPKKA. Positions 113–125 are enriched in basic residues; sequence SRSKYGAKRPKKA.

The protein belongs to the universal ribosomal protein uS12 family. As to quaternary structure, part of the 30S ribosomal subunit. Contacts proteins S8 and S17. May interact with IF1 in the 30S initiation complex.

In terms of biological role, with S4 and S5 plays an important role in translational accuracy. Interacts with and stabilizes bases of the 16S rRNA that are involved in tRNA selection in the A site and with the mRNA backbone. Located at the interface of the 30S and 50S subunits, it traverses the body of the 30S subunit contacting proteins on the other side and probably holding the rRNA structure together. The combined cluster of proteins S8, S12 and S17 appears to hold together the shoulder and platform of the 30S subunit. This Polaromonas sp. (strain JS666 / ATCC BAA-500) protein is Small ribosomal subunit protein uS12.